The sequence spans 202 residues: ATP-dependent Clp protease proteolytic subunit (202 aa).

S101 acts as the Nucleophile in catalysis. Residue H126 is part of the active site.

Belongs to the peptidase S14 family. Component of the chloroplastic Clp protease core complex.

The protein localises to the plastid. Its subcellular location is the chloroplast stroma. It catalyses the reaction Hydrolysis of proteins to small peptides in the presence of ATP and magnesium. alpha-casein is the usual test substrate. In the absence of ATP, only oligopeptides shorter than five residues are hydrolyzed (such as succinyl-Leu-Tyr-|-NHMec, and Leu-Tyr-Leu-|-Tyr-Trp, in which cleavage of the -Tyr-|-Leu- and -Tyr-|-Trp bonds also occurs).. Its function is as follows. Cleaves peptides in various proteins in a process that requires ATP hydrolysis. Has a chymotrypsin-like activity. Plays a major role in the degradation of misfolded proteins. The sequence is that of ATP-dependent Clp protease proteolytic subunit from Nuphar advena (Common spatterdock).